A 413-amino-acid chain; its full sequence is Multifunctional CCA protein (413 aa).

2 residues coordinate ATP: G8 and R11. Positions 8 and 11 each coordinate CTP. The Mg(2+) site is built by D21 and D23. ATP-binding residues include R91, R141, and R144. The CTP site is built by R91, R141, and R144. Positions 230–331 (TGAHLLLVLD…VRLLERCDAL (102 aa)) constitute an HD domain.

This sequence belongs to the tRNA nucleotidyltransferase/poly(A) polymerase family. Bacterial CCA-adding enzyme type 1 subfamily. In terms of assembly, monomer. Can also form homodimers and oligomers. It depends on Mg(2+) as a cofactor. The cofactor is Ni(2+).

The catalysed reaction is a tRNA precursor + 2 CTP + ATP = a tRNA with a 3' CCA end + 3 diphosphate. The enzyme catalyses a tRNA with a 3' CCA end + 2 CTP + ATP = a tRNA with a 3' CCACCA end + 3 diphosphate. Functionally, catalyzes the addition and repair of the essential 3'-terminal CCA sequence in tRNAs without using a nucleic acid template. Adds these three nucleotides in the order of C, C, and A to the tRNA nucleotide-73, using CTP and ATP as substrates and producing inorganic pyrophosphate. tRNA 3'-terminal CCA addition is required both for tRNA processing and repair. Also involved in tRNA surveillance by mediating tandem CCA addition to generate a CCACCA at the 3' terminus of unstable tRNAs. While stable tRNAs receive only 3'-terminal CCA, unstable tRNAs are marked with CCACCA and rapidly degraded. In Verminephrobacter eiseniae (strain EF01-2), this protein is Multifunctional CCA protein.